A 170-amino-acid polypeptide reads, in one-letter code: Shikimate kinase (170 aa).

11–16 (LSGKST) provides a ligand contact to ATP. S15 serves as a coordination point for Mg(2+). Positions 33, 57, and 79 each coordinate substrate. An ATP-binding site is contributed by R119. Position 137 (R137) interacts with substrate.

Belongs to the shikimate kinase family. In terms of assembly, monomer. The cofactor is Mg(2+).

It is found in the cytoplasm. The enzyme catalyses shikimate + ATP = 3-phosphoshikimate + ADP + H(+). It participates in metabolic intermediate biosynthesis; chorismate biosynthesis; chorismate from D-erythrose 4-phosphate and phosphoenolpyruvate: step 5/7. Functionally, catalyzes the specific phosphorylation of the 3-hydroxyl group of shikimic acid using ATP as a cosubstrate. This is Shikimate kinase from Clostridium botulinum (strain ATCC 19397 / Type A).